A 616-amino-acid polypeptide reads, in one-letter code: Chaperone protein HtpG (616 aa).

Residues 1 to 334 are a; substrate-binding; it reads MAEKQIHTFQ…TADLPLNVSR (334 aa). The interval 335-549 is b; that stretch reads EILQGNKVVD…ENEMGGNMER (215 aa). Residues 550–616 are c; sequence IMKSLGQDVP…FVKRINKLIN (67 aa).

Belongs to the heat shock protein 90 family. In terms of assembly, homodimer.

It localises to the cytoplasm. Its function is as follows. Molecular chaperone. Has ATPase activity. The polypeptide is Chaperone protein HtpG (Ruthia magnifica subsp. Calyptogena magnifica).